The sequence spans 307 residues: Capsid assembly scaffolding protein (307 aa).

2 stretches are compositionally biased toward acidic residues: residues 45–54 (IELASDEVET) and 83–101 (EPTD…EGSE). The tract at residues 45–105 (IELASDEVET…GTEGSEEFTP (61 aa)) is disordered.

It belongs to the T7likevirus capsid assembly scaffolding protein family.

Functionally, scaffolding protein involved in the icosahedric procapsid assembly. Coassembles with the capsid proteins to form the procapsid, in which the scaffolding protein is found within the external shell of icosahedrally arranged capsid protein subunits. In a subsequent step the scaffolding protein molecules are released from the procapsid. Facilitates assembly by binding to gp10 hexamers but not the pentamers and locking them into a morphogenically correct conformation. The polypeptide is Capsid assembly scaffolding protein (Escherichia coli (Bacteriophage T7)).